Consider the following 333-residue polypeptide: Protoheme IX farnesyltransferase (333 aa).

Helical transmembrane passes span 31–51 (VMSLVVFTGLTGLLAARAPIH), 52–72 (PVLAAIAVLCIAVGAGASGAL), 115–135 (MFLGFAVNWLAAGLLAFTIVF), 152–172 (IVIGGLAGALPPAIGWAAATG), 178–198 (AWLMVAIIFFWTPPHFWALSL), 223–243 (KQILLYSLILFPICLSPVLTG), 244–264 (LGGPIYLAVSGLGGLVFLLLA), and 303–323 (LFAFSILYLFALFAALLGEAV).

The protein belongs to the UbiA prenyltransferase family. Protoheme IX farnesyltransferase subfamily.

It is found in the cell inner membrane. It catalyses the reaction heme b + (2E,6E)-farnesyl diphosphate + H2O = Fe(II)-heme o + diphosphate. It participates in porphyrin-containing compound metabolism; heme O biosynthesis; heme O from protoheme: step 1/1. In terms of biological role, converts heme B (protoheme IX) to heme O by substitution of the vinyl group on carbon 2 of heme B porphyrin ring with a hydroxyethyl farnesyl side group. The polypeptide is Protoheme IX farnesyltransferase (Caulobacter vibrioides (strain ATCC 19089 / CIP 103742 / CB 15) (Caulobacter crescentus)).